Consider the following 3184-residue polypeptide: WD repeat- and FYVE domain-containing protein 4 (3184 aa).

Over residues 1 to 18 the composition is skewed to basic and acidic residues; the sequence is MEAEDLSKAEDRNEDPGS. Disordered stretches follow at residues 1–39, 944–993, 1837–1869, and 2309–2335; these read MEAEDLSKAEDRNEDPGSKNEGQLAAVQPDVPHGGQSSS, SHTH…QDST, VGAESTRNTSSPEAAAEGDSTVEGLQAPTKAHP, and ALSSGRHKESQDKNDHISQTNAENQDE. Residues 981–993 show a composition bias toward polar residues; sequence QAPQPLGESQDST. Over residues 2314-2324 the composition is skewed to basic and acidic residues; it reads RHKESQDKNDH. The 126-residue stretch at 2385–2510 folds into the BEACH-type PH domain; that stretch reads LDKEKVTQKF…DRSKAFKSFC (126 aa). One can recognise a BEACH domain in the interval 2527-2821; the sequence is SLRRYPGSDR…QLFTKPHPAR (295 aa). WD repeat units lie at residues 2863-2922, 2923-2972, 2973-3014, 3015-3057, 3058-3141, and 3142-3184; these read MYLF…YGSD, KVLM…PRGL, RLRQ…LDHL, THVT…GQPL, ASIT…ELDV, and SIAL…SADG. The segment at 3107–3128 is disordered; that stretch reads SVPGRPAGEEPPAQPPSPRGHK.

Interacts with HSP90AB1.

The protein localises to the early endosome. It is found in the endoplasmic reticulum. In terms of biological role, plays a critical role in the regulation of cDC1-mediated cross-presentation of viral and tumor antigens in dendritic cells. Mechanistically, acts near the plasma membrane and interacts with endosomal membranes to promote endosomal-to-cytosol antigen trafficking. Also plays a role in B-cell survival through regulation of autophagy. In Homo sapiens (Human), this protein is WD repeat- and FYVE domain-containing protein 4 (WDFY4).